We begin with the raw amino-acid sequence, 447 residues long: Na(+)/H(+) antiporter NhaA 2 (447 aa).

Helical transmembrane passes span 30-50, 81-101, 117-137, 146-166, 175-195, 199-219, 220-240, 315-335, 350-370, 383-403, and 415-435; these read FIHI…LAVL, LHKW…ALEL, LLSI…YLLL, GWGT…ALLG, IFML…VAIG, AVDW…RAMA, FLGV…WLVI, LLHP…NAGV, VFVG…WIAV, WGMV…ALFI, and AAKL…FLCL.

Belongs to the NhaA Na(+)/H(+) (TC 2.A.33) antiporter family.

It is found in the cell inner membrane. The enzyme catalyses Na(+)(in) + 2 H(+)(out) = Na(+)(out) + 2 H(+)(in). Its function is as follows. Na(+)/H(+) antiporter that extrudes sodium in exchange for external protons. This chain is Na(+)/H(+) antiporter NhaA 2, found in Vibrio vulnificus (strain CMCP6).